Reading from the N-terminus, the 348-residue chain is Neuronal growth regulator 1 (348 aa).

An N-terminal signal peptide occupies residues 1 to 31; sequence MVLLAQGACCSNQWLAAVLLSLCSCLPAGQS. Ig-like C2-type domains are found at residues 32–128, 133–215, and 219–307; these read VDFP…VHLT, PKIY…RVVV, and PTIQ…LPLN. Cysteine 54 and cysteine 112 form a disulfide bridge. N-linked (GlcNAc...) asparagine glycosylation is found at asparagine 67 and asparagine 149. 2 cysteine pairs are disulfide-bonded: cysteine 154-cysteine 197 and cysteine 239-cysteine 291. Residue tyrosine 181 is modified to Phosphotyrosine. Asparagine 269, asparagine 280, asparagine 288, and asparagine 301 each carry an N-linked (GlcNAc...) asparagine glycan. Glycine 318 carries GPI-anchor amidated glycine lipidation. Positions 319–348 are cleaved as a propeptide — removed in mature form; it reads SACDLFSCWSLALTLSSVISIFYLKNAILQ.

The protein belongs to the immunoglobulin superfamily. IgLON family. In terms of processing, glycosylated. As to expression, highly expressed in brain.

It localises to the cell membrane. In terms of biological role, may be involved in cell-adhesion. May function as a trans-neural growth-promoting factor in regenerative axon sprouting in the mammalian brain. The sequence is that of Neuronal growth regulator 1 (Negr1) from Rattus norvegicus (Rat).